Here is a 220-residue protein sequence, read N- to C-terminus: Uracil-DNA glycosylase (220 aa).

The Proton acceptor role is filled by aspartate 65.

This sequence belongs to the uracil-DNA glycosylase (UDG) superfamily. UNG family.

Its subcellular location is the cytoplasm. The enzyme catalyses Hydrolyzes single-stranded DNA or mismatched double-stranded DNA and polynucleotides, releasing free uracil.. Functionally, excises uracil residues from the DNA which can arise as a result of misincorporation of dUMP residues by DNA polymerase or due to deamination of cytosine. This is Uracil-DNA glycosylase from Phocaeicola vulgatus (strain ATCC 8482 / DSM 1447 / JCM 5826 / CCUG 4940 / NBRC 14291 / NCTC 11154) (Bacteroides vulgatus).